A 394-amino-acid polypeptide reads, in one-letter code: Fatty acid resistance protein FarA (394 aa).

The interval 1-23 is disordered; that stretch reads MKSGNSEPNLMETHTDETKLQNT. The chain crosses the membrane as a helical span at residues 33-53; that stretch reads ALTLLFALSAAAAGSAFFLWW. The disordered stretch occupies residues 356-376; it reads SAAGAPVSKTPGAALPEMEST.

It belongs to the membrane fusion protein (MFP) (TC 8.A.1) family. As to quaternary structure, probably part of a tripartite efflux system FarAB-MtrE, which is composed of an inner membrane transporter, FarB, a periplasmic membrane fusion protein, FarA, and an outer membrane component, MtrE.

It is found in the cell inner membrane. In terms of biological role, mediates resistance to long-chained antibacterial fatty acids (FAs). Function is dependent on the MtrE outer membrane protein. This chain is Fatty acid resistance protein FarA, found in Neisseria gonorrhoeae.